A 388-amino-acid chain; its full sequence is Fetuin-B (388 aa).

Positions 1 to 18 (MGLLRLLVLCTLAACCMA) are cleaved as a signal peptide. 2 Cystatin fetuin-B-type domains span residues 28-141 (QRPL…YNCT) and 152-264 (TTCP…VTCE). N-linked (GlcNAc...) asparagine glycosylation occurs at N40. 5 disulfide bridges follow: C96/C107, C120/C140, C154/C157, C217/C224, and C237/C263. Residue N139 is glycosylated (N-linked (GlcNAc...) asparagine). Disordered stretches follow at residues 270–343 (AQVP…PQGD) and 367–388 (KEQRSAECPGPEKENNPLVLPP). The segment covering 279 to 300 (AVTQGPQKLPQKNTAPTSSPSV) has biased composition (polar residues). T292 and T295 each carry an O-linked (GalNAc...) threonine glycan. The residue at position 321 (S321) is a Phosphoserine. The segment covering 367 to 381 (KEQRSAECPGPEKEN) has biased composition (basic and acidic residues).

The protein belongs to the fetuin family. In terms of tissue distribution, liver, lung and tongue.

Its subcellular location is the secreted. Its function is as follows. Protease inhibitor required for egg fertilization. Required to prevent premature zona pellucida hardening before fertilization, probably by inhibiting the protease activity of ASTL, a protease that mediates the cleavage of ZP2 and triggers zona pellucida hardening. The polypeptide is Fetuin-B (Fetub) (Mus musculus (Mouse)).